The primary structure comprises 456 residues: CCA-adding enzyme (456 aa).

ATP is bound by residues S53 and K56. Residues S53 and K56 each contribute to the CTP site. Mg(2+) is bound by residues D65, D67, and D119. ATP is bound by residues H142, K161, and Y170. H142, K161, and Y170 together coordinate CTP.

It belongs to the tRNA nucleotidyltransferase/poly(A) polymerase family. Archaeal CCA-adding enzyme subfamily. In terms of assembly, homodimer. Requires Mg(2+) as cofactor.

The catalysed reaction is a tRNA precursor + 2 CTP + ATP = a tRNA with a 3' CCA end + 3 diphosphate. It carries out the reaction a tRNA with a 3' CCA end + 2 CTP + ATP = a tRNA with a 3' CCACCA end + 3 diphosphate. In terms of biological role, catalyzes the addition and repair of the essential 3'-terminal CCA sequence in tRNAs without using a nucleic acid template. Adds these three nucleotides in the order of C, C, and A to the tRNA nucleotide-73, using CTP and ATP as substrates and producing inorganic pyrophosphate. tRNA 3'-terminal CCA addition is required both for tRNA processing and repair. Also involved in tRNA surveillance by mediating tandem CCA addition to generate a CCACCA at the 3' terminus of unstable tRNAs. While stable tRNAs receive only 3'-terminal CCA, unstable tRNAs are marked with CCACCA and rapidly degraded. In Thermococcus kodakarensis (strain ATCC BAA-918 / JCM 12380 / KOD1) (Pyrococcus kodakaraensis (strain KOD1)), this protein is CCA-adding enzyme.